We begin with the raw amino-acid sequence, 509 residues long: L-aspartate semialdehyde sulfurtransferase (509 aa).

Residue Cys-133 is the Cysteine persulfide intermediate of the active site. CBS domains follow at residues 394–450 and 455–509; these read LSKP…NKKT and MTRN…GGKK. Residues Ser-395, Ile-399, and His-421 each coordinate S-methyl-5'-thioadenosine. S-adenosyl-L-methionine-binding positions include Asp-439, Thr-456, Ile-460, and 479 to 482; that span reads NISG. 497–500 contributes to the S-methyl-5'-thioadenosine binding site; sequence TSED.

This sequence belongs to the L-aspartate semialdehyde sulfurtransferase family. Homodimer. May form a complex with MJ0099.

It catalyses the reaction L-aspartate 4-semialdehyde + reduced 2[4Fe-4S]-[ferredoxin] + hydrogen sulfide + 3 H(+) = oxidized 2[4Fe-4S]-[ferredoxin] + L-homocysteine + H2O. It functions in the pathway amino-acid biosynthesis. Its activity is regulated as follows. The ligand-induced conformational reorganization of the protein could be an important regulatory mechanism. Its function is as follows. Required for O-acetylhomoserine sulfhydrylase (OAHS)-independent homocysteine (Hcy) biosynthesis. Together with MJ0099, catalyzes the condensation of sulfide with aspartate semialdehyde to generate homocysteine. Likely functions through persulfide intermediate. The polypeptide is L-aspartate semialdehyde sulfurtransferase (Methanocaldococcus jannaschii (strain ATCC 43067 / DSM 2661 / JAL-1 / JCM 10045 / NBRC 100440) (Methanococcus jannaschii)).